The primary structure comprises 456 residues: Gamma-aminobutyric acid receptor subunit alpha-1 (456 aa).

The N-terminal stretch at 1–27 (MRKSPGLSDCLWAWILLLSTLTGRSYG) is a signal peptide. Topologically, residues 28–253 (QPSLQDELKD…FHLKRKIGYF (226 aa)) are extracellular. Asparagine 38 carries an N-linked (GlcNAc...) asparagine glycan. Residue arginine 94 coordinates 4-aminobutanoate. Asparagine 138 carries N-linked (GlcNAc...) asparagine glycosylation. 4-aminobutanoate is bound at residue threonine 157. Cysteine 166 and cysteine 180 form a disulfide bridge. The helical transmembrane segment at 254–274 (VIQTYLPCIMTVILSQVSFWL) threads the bilayer. Tryptophan 273 contacts 3alpha-hydroxy-5alpha-pregnan-11,20-dione. Topologically, residues 275–279 (NRESV) are cytoplasmic. A helical transmembrane segment spans residues 280–301 (PARTVFGVTTVLTMTTLSISAR). Residues 302–311 (NSLPKVAYAT) lie on the Extracellular side of the membrane. The chain crosses the membrane as a helical span at residues 312 to 333 (AMDWFIAVCYAFVFSALIEFAT). Residues 334–421 (VNYFTKRGYA…TFNSVSKIDR (88 aa)) lie on the Cytoplasmic side of the membrane. A helical membrane pass occupies residues 422–441 (LSRIAFPLLFGIFNLVYWAT). The Extracellular segment spans residues 442 to 456 (YLNREPQLKAPTPHQ).

Belongs to the ligand-gated ion channel (TC 1.A.9) family. Gamma-aminobutyric acid receptor (TC 1.A.9.5) subfamily. GABRA1 sub-subfamily. As to quaternary structure, heteropentamer, formed by a combination of alpha (GABRA1-6), beta (GABRB1-3), gamma (GABRG1-3), delta (GABRD), epsilon (GABRE), rho (GABRR1-3), pi (GABRP) and theta (GABRQ) subunits, each subunit exhibiting distinct physiological and pharmacological properties. Interacts with UBQLN1. Interacts with TRAK1. Interacts with KIF21B. Identified in a complex of 720 kDa composed of LHFPL4, NLGN2, GABRA1, GABRB2, GABRG2 and GABRB3. Interacts with LHFPL4. Interacts with NLGN2. Interacts with SHISA7; interaction leads regulation of GABAAR trafficking, channel deactivation kinetics and pharmacology.

The protein resides in the postsynaptic cell membrane. The protein localises to the cell membrane. It is found in the cytoplasmic vesicle membrane. The enzyme catalyses chloride(in) = chloride(out). Its activity is regulated as follows. Allosterically activated by benzodiazepines and the anesthetic alphaxalone. Allosterically activated by pentobarbital. Inhibited by the antagonist bicuculline. Potentiated by histamine. Its function is as follows. Alpha subunit of the heteropentameric ligand-gated chloride channel gated by Gamma-aminobutyric acid (GABA), a major inhibitory neurotransmitter in the brain. GABA-gated chloride channels, also named GABA(A) receptors (GABAAR), consist of five subunits arranged around a central pore and contain GABA active binding site(s) located at the alpha and beta subunit interface(s). When activated by GABA, GABAARs selectively allow the flow of chloride anions across the cell membrane down their electrochemical gradient. Alpha-1/GABRA1-containing GABAARs are largely synaptic. Chloride influx into the postsynaptic neuron following GABAAR opening decreases the neuron ability to generate a new action potential, thereby reducing nerve transmission. GABAARs containing alpha-1 and beta-2 or -3 subunits exhibit synaptogenic activity; the gamma-2 subunit being necessary but not sufficient to induce rapid synaptic contacts formation. GABAARs function also as histamine receptor where histamine binds at the interface of two neighboring beta subunits and potentiates GABA response. GABAARs containing alpha, beta and epsilon subunits also permit spontaneous chloride channel activity while preserving the structural information required for GABA-gated openings. Alpha-1-mediated plasticity in the orbitofrontal cortex regulates context-dependent action selection. Together with rho subunits, may also control neuronal and glial GABAergic transmission in the cerebellum. This is Gamma-aminobutyric acid receptor subunit alpha-1 from Homo sapiens (Human).